A 309-amino-acid chain; its full sequence is Homoserine kinase (309 aa).

91–101 (PIGSGLGSSAC) is an ATP binding site.

It belongs to the GHMP kinase family. Homoserine kinase subfamily.

The protein resides in the cytoplasm. The catalysed reaction is L-homoserine + ATP = O-phospho-L-homoserine + ADP + H(+). It participates in amino-acid biosynthesis; L-threonine biosynthesis; L-threonine from L-aspartate: step 4/5. Catalyzes the ATP-dependent phosphorylation of L-homoserine to L-homoserine phosphate. The sequence is that of Homoserine kinase from Serratia proteamaculans (strain 568).